The chain runs to 533 residues: DELLA protein GAI (533 aa).

Over residues 1–12 the composition is skewed to basic residues; it reads MKRDHHHHHHQD. The segment at 1 to 24 is disordered; the sequence is MKRDHHHHHHQDKKTMMMNEEDDG. The DELLA motif signature appears at 28–32; it reads DELLA. Residues 50–54 carry the LEXLE motif motif; that stretch reads LEQLE. The short motif at 73 to 77 is the VHYNP motif element; that stretch reads VHYNP. In terms of domain architecture, GRAS spans 160–529; sequence VDSQENGVRL…RPLIATSAWK (370 aa). The leucine repeat I (LRI) stretch occupies residues 167-221; that stretch reads VRLVHALLACAEAVQKENLTVAEALVKQIGFLAVSQIGAMRKVATYFAEALARRI. Residues 174 to 178 carry the LxCxE motif motif; the sequence is LACAE. The interval 240-305 is VHIID; sequence QMHFYETCPY…GGPPVFRLTG (66 aa). The short motif at 271–275 is the VHIID element; that stretch reads VHVID. The tract at residues 319 to 351 is leucine repeat II (LRII); it reads EVGCKLAHLAEAIHVEFEYRGFVANTLADLDAS. A PFYRE region spans residues 363-450; it reads VAVNSVFELH…EVYLGKQICN (88 aa). The short motif at 371–375 is the LXXLL motif element; the sequence is LHKLL. An SAW region spans residues 453-529; sequence ACDGPDRVER…RPLIATSAWK (77 aa).

This sequence belongs to the GRAS family. DELLA subfamily. As to quaternary structure, interacts directly with the GID2/SLY1 component of the SCF(GID2) complex. Interacts (via N-terminus) with GID1A, GID1B and GID1B (via N-terminus). Interacts with the BOI proteins BOI, BRG1, BRG2, BRG3 and NUP58. Interacts with TOPP4. Interacts with TCP14 and TCP15. Interacts with FLZ5. Binds to and coactivates GAF1/IDD2 and ENY/IDD1 at the promoter of GA20OX2 gene. Binds to PDF2 and ATML1. Interacts with the prefoldin alpha subunits PFD3 and PFD5 in the nucleus. Post-translationally, phosphorylated. Gibberellin (GA) induces dephosphorylation of GAI by TOPP4 and subsequent degradation by the proteasomal pathway. In terms of processing, may be ubiquitinated, as suggested by its interaction with GID2. Ubiquitination is however unsure since in contrast to other DELLA proteins, it is not ubiquitinated and degraded upon GA application. Nevertheless, ubiquitination may be triggered by other processes. As to expression, ubiquitously expressed. Expressed in rosette leaves, roots, stems and inflorescences of greenhouse grown.

It localises to the nucleus. Transcription activation is repressed by gibberellic acid GA(3) in the presence of TPR4. Transcriptional regulator that acts as a repressor of the gibberellin (GA) signaling pathway. Transcription coactivator of the zinc finger transcription factors GAF1/IDD2 and ENY/IDD1 in regulation of gibberellin homeostasis and signaling. No effect of the BOI proteins on its stability. Probably acts by participating in large multiprotein complexes that repress transcription of GA-inducible genes. Positively regulates XERICO expression. In contrast to RGA, it is less sensitive to GA. Its activity is probably regulated by other phytohormones such as auxin and ethylene. Involved in the regulation of seed dormancy and germination, including glucose-induced delay of seed germination. Involved in the process leading to microtubules (MTs) dissociation in response to gibberellic acid (GA) probably by mediating the translocation of the prefoldin co-chaperone complex from the cytoplasm to the nucleus. The sequence is that of DELLA protein GAI from Arabidopsis thaliana (Mouse-ear cress).